Reading from the N-terminus, the 267-residue chain is L-aspartate dehydrogenase (267 aa).

Residues alanine 124 and asparagine 190 each coordinate NAD(+). Histidine 220 is an active-site residue.

The protein belongs to the L-aspartate dehydrogenase family.

The enzyme catalyses L-aspartate + NADP(+) + H2O = oxaloacetate + NH4(+) + NADPH + H(+). The catalysed reaction is L-aspartate + NAD(+) + H2O = oxaloacetate + NH4(+) + NADH + H(+). It participates in cofactor biosynthesis; NAD(+) biosynthesis; iminoaspartate from L-aspartate (dehydrogenase route): step 1/1. In terms of biological role, specifically catalyzes the NAD or NADP-dependent dehydrogenation of L-aspartate to iminoaspartate. The chain is L-aspartate dehydrogenase from Ralstonia pickettii (strain 12J).